A 392-amino-acid chain; its full sequence is Phosphoglycerate kinase (392 aa).

Residues 21–23 (DFN), R36, 59–62 (HLGR), R118, and R151 contribute to the substrate site. ATP is bound by residues K202, E321, and 347–350 (GGDS).

Belongs to the phosphoglycerate kinase family. In terms of assembly, monomer.

It localises to the cytoplasm. It catalyses the reaction (2R)-3-phosphoglycerate + ATP = (2R)-3-phospho-glyceroyl phosphate + ADP. It functions in the pathway carbohydrate degradation; glycolysis; pyruvate from D-glyceraldehyde 3-phosphate: step 2/5. The protein is Phosphoglycerate kinase of Symbiobacterium thermophilum (strain DSM 24528 / JCM 14929 / IAM 14863 / T).